Here is a 188-residue protein sequence, read N- to C-terminus: GMP synthase [glutamine-hydrolyzing] subunit A (188 aa).

A Glutamine amidotransferase type-1 domain is found at 3-188 (PLYVVNNYGQ…FSICTGQNKG (186 aa)). The active-site Nucleophile is cysteine 75. Catalysis depends on residues histidine 162 and glutamate 164.

As to quaternary structure, heterodimer composed of a glutamine amidotransferase subunit (A) and a GMP-binding subunit (B).

It catalyses the reaction XMP + L-glutamine + ATP + H2O = GMP + L-glutamate + AMP + diphosphate + 2 H(+). Its pathway is purine metabolism; GMP biosynthesis; GMP from XMP (L-Gln route): step 1/1. Catalyzes the synthesis of GMP from XMP. The chain is GMP synthase [glutamine-hydrolyzing] subunit A from Methanospirillum hungatei JF-1 (strain ATCC 27890 / DSM 864 / NBRC 100397 / JF-1).